The following is a 373-amino-acid chain: Eukaryotic translation initiation factor 3 subunit M (373 aa).

Ser2 is subject to N-acetylserine. Residues Ser2 and Ser152 each carry the phosphoserine modification. The PCI domain maps to 180–338; that stretch reads AASKVMVELL…RKVVVSHSTH (159 aa). Lys253 bears the N6-acetyllysine mark. Ser366 carries the phosphoserine modification.

The protein belongs to the eIF-3 subunit M family. Component of the eukaryotic translation initiation factor 3 (eIF-3) complex, which is composed of 13 subunits: EIF3A, EIF3B, EIF3C, EIF3D, EIF3E, EIF3F, EIF3G, EIF3H, EIF3I, EIF3J, EIF3K, EIF3L and EIF3M. The eIF-3 complex appears to include 3 stable modules: module A is composed of EIF3A, EIF3B, EIF3G and EIF3I; module B is composed of EIF3F, EIF3H, and EIF3M; and module C is composed of EIF3C, EIF3D, EIF3E, EIF3K and EIF3L. EIF3C of module C binds EIF3B of module A and EIF3H of module B, thereby linking the three modules. EIF3J is a labile subunit that binds to the eIF-3 complex via EIF3B. The eIF-3 complex interacts with RPS6KB1 under conditions of nutrient depletion. Mitogenic stimulation leads to binding and activation of a complex composed of MTOR and RPTOR, leading to phosphorylation and release of RPS6KB1 and binding of EIF4B to eIF-3.

The protein localises to the cytoplasm. Functionally, component of the eukaryotic translation initiation factor 3 (eIF-3) complex, which is required for several steps in the initiation of protein synthesis. The eIF-3 complex associates with the 40S ribosome and facilitates the recruitment of eIF-1, eIF-1A, eIF-2:GTP:methionyl-tRNAi and eIF-5 to form the 43S pre-initiation complex (43S PIC). The eIF-3 complex stimulates mRNA recruitment to the 43S PIC and scanning of the mRNA for AUG recognition. The eIF-3 complex is also required for disassembly and recycling of post-termination ribosomal complexes and subsequently prevents premature joining of the 40S and 60S ribosomal subunits prior to initiation. The eIF-3 complex specifically targets and initiates translation of a subset of mRNAs involved in cell proliferation, including cell cycling, differentiation and apoptosis, and uses different modes of RNA stem-loop binding to exert either translational activation or repression. The chain is Eukaryotic translation initiation factor 3 subunit M from Bos taurus (Bovine).